The primary structure comprises 121 residues: Putative ferredoxin (121 aa).

The protein to E.coli YkgJ.

This Acinetobacter calcoaceticus protein is Putative ferredoxin.